The following is a 728-amino-acid chain: 1,4-alpha-glucan branching enzyme GlgB (728 aa).

The Nucleophile role is filled by D405. E458 acts as the Proton donor in catalysis.

The protein belongs to the glycosyl hydrolase 13 family. GlgB subfamily. Monomer.

It carries out the reaction Transfers a segment of a (1-&gt;4)-alpha-D-glucan chain to a primary hydroxy group in a similar glucan chain.. The protein operates within glycan biosynthesis; glycogen biosynthesis. Catalyzes the formation of the alpha-1,6-glucosidic linkages in glycogen by scission of a 1,4-alpha-linked oligosaccharide from growing alpha-1,4-glucan chains and the subsequent attachment of the oligosaccharide to the alpha-1,6 position. This Escherichia coli O1:K1 / APEC protein is 1,4-alpha-glucan branching enzyme GlgB.